The chain runs to 122 residues: Probable non-specific lipid-transfer protein 3 (122 aa).

The N-terminal stretch at 1–29 is a signal peptide; sequence MARLNSKAVAAAVVLAAVVLMMAGREASA. Intrachain disulfides connect Cys33–Cys81, Cys43–Cys58, Cys59–Cys104, and Cys79–Cys118.

This sequence belongs to the plant LTP family. Expressed in phloem. Also detected in the epidermis near the vascular tissues in resistant plants infected by Hessian fly larvae.

In terms of biological role, plant non-specific lipid-transfer proteins transfer phospholipids as well as galactolipids across membranes. May play a role in wax or cutin deposition in the cell walls of expanding epidermal cells and certain secretory tissues. The protein is Probable non-specific lipid-transfer protein 3 (LTP3) of Triticum aestivum (Wheat).